The primary structure comprises 230 residues: Large ribosomal subunit protein uL1 (230 aa).

This sequence belongs to the universal ribosomal protein uL1 family. In terms of assembly, part of the 50S ribosomal subunit.

Binds directly to 23S rRNA. The L1 stalk is quite mobile in the ribosome, and is involved in E site tRNA release. In terms of biological role, protein L1 is also a translational repressor protein, it controls the translation of the L11 operon by binding to its mRNA. In Leuconostoc citreum (strain KM20), this protein is Large ribosomal subunit protein uL1.